Reading from the N-terminus, the 338-residue chain is MAQCVQTTTILEQKEEKTVTLLVPQAGKRKFEIVYFNIITFAYWHIAGLYGLYLCFTSTKWATVLFSFFLFVVAEVGVTAGSHRLWSHKTYKAKLPLQILLMVMNSLAFQNTVIDWVRDHRLHHKYSDTDADPHNASRGFFYSHVGWLLVRKHPDVKKRGKEIDISDIYNNPVLRFQKKYAIPFIGAVCFVLPTLIPVYGWGETWTNAWHVAMLRYIMNLNVTFLVNSAAHIYGKRPYDKKILPSQNIAVSIATFGEGFHNYHHVFPWDYRAAELGNNSLNFPTKFIDFFAWIGWAYDLKTVSKEMIKQRSKRTGDGTNLWGLEDVDTPEDLKNTKGE.

Transmembrane regions (helical) follow at residues 33-53 (IVYF…YGLY) and 61-81 (WATV…VTAG). Positions 83 to 88 (HRLWSH) match the Histidine box-1 motif. Residues 97 to 117 (LQILLMVMNSLAFQNTVIDWV) traverse the membrane as a helical segment. The short motif at 120-124 (HRLHH) is the Histidine box-2 element. The next 2 helical transmembrane spans lie at 181 to 201 (AIPF…VYGW) and 212 to 234 (AMLR…HIYG). Positions 260 to 264 (HNYHH) match the Histidine box-3 motif. Residues 318–338 (TNLWGLEDVDTPEDLKNTKGE) form a disordered region.

The protein belongs to the fatty acid desaturase type 1 family. Fe cation is required as a cofactor. As to expression, detected in the pheromone gland.

The protein localises to the membrane. The catalysed reaction is an 11,12-saturated fatty acyl-CoA + 2 Fe(II)-[cytochrome b5] + O2 + 2 H(+) = an (11Z)-Delta(11)-fatty acyl-CoA + 2 Fe(III)-[cytochrome b5] + 2 H2O. Catalyzes the formation of delta(11) fatty acyl precursors in the pheromone gland, and has high activity towards palmitic acid and stearic acid. The protein is Acyl-CoA Delta(11) desaturase of Spodoptera littoralis (Egyptian cotton leafworm).